The primary structure comprises 915 residues: Probable inorganic carbon transporter subunit DabA (915 aa).

Residues Cys392, Asp394, His566, and Cys581 each contribute to the Zn(2+) site.

It belongs to the inorganic carbon transporter (TC 9.A.2) DabA family. As to quaternary structure, forms a complex with DabB. The cofactor is Zn(2+).

The protein resides in the cell inner membrane. Its function is as follows. Part of an energy-coupled inorganic carbon pump. The sequence is that of Probable inorganic carbon transporter subunit DabA from Nitrosospira multiformis (strain ATCC 25196 / NCIMB 11849 / C 71).